The primary structure comprises 338 residues: Glycerol-3-phosphate dehydrogenase [NAD(P)+] (338 aa).

Positions 13, 14, and 108 each coordinate NADPH. Sn-glycerol 3-phosphate is bound by residues lysine 108, glycine 139, and serine 141. Alanine 143 is a binding site for NADPH. 5 residues coordinate sn-glycerol 3-phosphate: lysine 194, aspartate 247, serine 257, arginine 258, and asparagine 259. Catalysis depends on lysine 194, which acts as the Proton acceptor. Arginine 258 is an NADPH binding site. Positions 282 and 284 each coordinate NADPH.

This sequence belongs to the NAD-dependent glycerol-3-phosphate dehydrogenase family.

It localises to the cytoplasm. It carries out the reaction sn-glycerol 3-phosphate + NAD(+) = dihydroxyacetone phosphate + NADH + H(+). The enzyme catalyses sn-glycerol 3-phosphate + NADP(+) = dihydroxyacetone phosphate + NADPH + H(+). It participates in membrane lipid metabolism; glycerophospholipid metabolism. Its function is as follows. Catalyzes the reduction of the glycolytic intermediate dihydroxyacetone phosphate (DHAP) to sn-glycerol 3-phosphate (G3P), the key precursor for phospholipid synthesis. This is Glycerol-3-phosphate dehydrogenase [NAD(P)+] from Streptococcus pneumoniae serotype 19F (strain G54).